The following is a 407-amino-acid chain: Peptidase T (407 aa).

Position 82 (H82) interacts with Zn(2+). Residue D84 is part of the active site. D143 provides a ligand contact to Zn(2+). The active-site Proton acceptor is E177. Positions 178, 200, and 382 each coordinate Zn(2+).

It belongs to the peptidase M20B family. Requires Zn(2+) as cofactor.

It localises to the cytoplasm. It carries out the reaction Release of the N-terminal residue from a tripeptide.. Cleaves the N-terminal amino acid of tripeptides. In Streptococcus thermophilus (strain CNRZ 1066), this protein is Peptidase T.